Here is a 514-residue protein sequence, read N- to C-terminus: Thymus-specific serine protease (514 aa).

An N-terminal signal peptide occupies residues 1-24 (MAVWLAQWLGPLLLVSLWGLLAPA). N-linked (GlcNAc...) asparagine glycosylation is found at Asn-70 and Asn-172. The Charge relay system role is filled by Ser-185. Asn-321 carries an N-linked (GlcNAc...) asparagine glycan. Catalysis depends on charge relay system residues Asp-447 and His-472.

This sequence belongs to the peptidase S28 family. As to expression, expressed predominantly in cortical thymic epithelial cells.

It is found in the cytoplasmic vesicle. Its function is as follows. Protease that may play a role in T-cell development. The sequence is that of Thymus-specific serine protease (PRSS16) from Homo sapiens (Human).